Reading from the N-terminus, the 319-residue chain is Ferrochelatase (319 aa).

Residues His193 and Glu274 each coordinate Fe cation.

Belongs to the ferrochelatase family.

It is found in the cytoplasm. It carries out the reaction heme b + 2 H(+) = protoporphyrin IX + Fe(2+). It functions in the pathway porphyrin-containing compound metabolism; protoheme biosynthesis; protoheme from protoporphyrin-IX: step 1/1. Catalyzes the ferrous insertion into protoporphyrin IX. The polypeptide is Ferrochelatase (Actinobacillus pleuropneumoniae serotype 5b (strain L20)).